Reading from the N-terminus, the 129-residue chain is Procyclic form-specific polypeptide A-beta (129 aa).

A signal peptide spans 1–27 (MAPRSLYLLAVLLFSANLFAGVGFAAA). The interval 27 to 111 (AAEGPEDKGL…PEPEPGAATL (85 aa)) is disordered. Acidic residues predominate over residues 53–104 (DDTNGTDPDPEPEPEPEPEPEPEPEPEPEPEPEPEPEPEPEPEPEPEPEPEP). N-linked (GlcNAc...) asparagine glycosylation occurs at N56. 24 repeat units span residues 59-60 (DP), 61-62 (DP), 63-64 (EP), 65-66 (EP), 67-68 (EP), 69-70 (EP), 71-72 (EP), 73-74 (EP), 75-76 (EP), 77-78 (EP), 79-80 (EP), 81-82 (EP), 83-84 (EP), 85-86 (EP), 87-88 (EP), 89-90 (EP), 91-92 (EP), 93-94 (EP), 95-96 (EP), 97-98 (EP), 99-100 (EP), 101-102 (EP), 103-104 (EP), and 105-106 (EP). The segment at 59–106 (DPDPEPEPEPEPEPEPEPEPEPEPEPEPEPEPEPEPEPEPEPEPEPEP) is 24 X 2 AA tandem repeats of [DE]-P. A lipid anchor (GPI-anchor amidated glycine) is attached at G107. Residues 108–129 (AATLKSVALPFAIAAVGLVAAF) constitute a propeptide that is removed on maturation.

The protein resides in the cell membrane. Functionally, major surface antigen of procyclic forms. The polypeptide is Procyclic form-specific polypeptide A-beta (PARPA-BETA) (Trypanosoma brucei brucei).